A 460-amino-acid polypeptide reads, in one-letter code: Bifunctional protein GlmU (460 aa).

Residues 1–229 (MSNYAIILAA…FEESLGVNDR (229 aa)) form a pyrophosphorylase region. UDP-N-acetyl-alpha-D-glucosamine is bound by residues 8 to 11 (LAAG), lysine 22, glutamine 72, and 77 to 78 (GT). Aspartate 102 is a Mg(2+) binding site. Glycine 139, glutamate 154, asparagine 169, and asparagine 227 together coordinate UDP-N-acetyl-alpha-D-glucosamine. Asparagine 227 contacts Mg(2+). Positions 230–250 (VALATAEDVMRRRINKTHMIN) are linker. Residues 251 to 460 (GVTFQNPNAT…KKPHHPSQQK (210 aa)) form an N-acetyltransferase region. Residues arginine 332 and lysine 350 each coordinate UDP-N-acetyl-alpha-D-glucosamine. The Proton acceptor role is filled by histidine 362. UDP-N-acetyl-alpha-D-glucosamine-binding residues include tyrosine 365 and asparagine 376. Acetyl-CoA contacts are provided by residues alanine 379, 385–386 (NY), serine 404, alanine 422, and arginine 439.

The protein in the N-terminal section; belongs to the N-acetylglucosamine-1-phosphate uridyltransferase family. This sequence in the C-terminal section; belongs to the transferase hexapeptide repeat family. In terms of assembly, homotrimer. It depends on Mg(2+) as a cofactor.

The protein localises to the cytoplasm. It catalyses the reaction alpha-D-glucosamine 1-phosphate + acetyl-CoA = N-acetyl-alpha-D-glucosamine 1-phosphate + CoA + H(+). It carries out the reaction N-acetyl-alpha-D-glucosamine 1-phosphate + UTP + H(+) = UDP-N-acetyl-alpha-D-glucosamine + diphosphate. It participates in nucleotide-sugar biosynthesis; UDP-N-acetyl-alpha-D-glucosamine biosynthesis; N-acetyl-alpha-D-glucosamine 1-phosphate from alpha-D-glucosamine 6-phosphate (route II): step 2/2. Its pathway is nucleotide-sugar biosynthesis; UDP-N-acetyl-alpha-D-glucosamine biosynthesis; UDP-N-acetyl-alpha-D-glucosamine from N-acetyl-alpha-D-glucosamine 1-phosphate: step 1/1. It functions in the pathway bacterial outer membrane biogenesis; LPS lipid A biosynthesis. In terms of biological role, catalyzes the last two sequential reactions in the de novo biosynthetic pathway for UDP-N-acetylglucosamine (UDP-GlcNAc). The C-terminal domain catalyzes the transfer of acetyl group from acetyl coenzyme A to glucosamine-1-phosphate (GlcN-1-P) to produce N-acetylglucosamine-1-phosphate (GlcNAc-1-P), which is converted into UDP-GlcNAc by the transfer of uridine 5-monophosphate (from uridine 5-triphosphate), a reaction catalyzed by the N-terminal domain. This chain is Bifunctional protein GlmU, found in Streptococcus thermophilus (strain ATCC BAA-491 / LMD-9).